A 299-amino-acid chain; its full sequence is Neomycin C epimerase (299 aa).

Residues Pro-10–Arg-222 form the Radical SAM core domain. Residues Cys-26, Cys-30, Cys-33, Cys-226, and Cys-247 each contribute to the [4Fe-4S] cluster site. The active-site Proton donor is Cys-249. Residues Cys-271 and Cys-274 each coordinate [4Fe-4S] cluster.

The protein belongs to the radical SAM superfamily. [4Fe-4S] cluster is required as a cofactor.

It carries out the reaction neomycin C + AH2 + S-adenosyl-L-methionine = neomycin B + 5'-deoxyadenosine + L-methionine + A + H(+). It participates in antibiotic biosynthesis; neomycin biosynthesis. Its function is as follows. Catalyzes the last step of neomycin B biosynthesis, i.e. the irreversible epimerization at C-5''' of neomycin C to give neomycin B. To a lesser extent, is also able to convert neomycin Y2 to neomycin Y1. The sequence is that of Neomycin C epimerase from Streptomyces fradiae (Streptomyces roseoflavus).